A 336-amino-acid chain; its full sequence is F420-dependent glucose-6-phosphate dehydrogenase (336 aa).

Asp39 lines the coenzyme F420-(gamma-Glu)n pocket. His40 serves as the catalytic Proton donor. Coenzyme F420-(gamma-Glu)n-binding positions include Thr76 and 107–108 (TG). Glu109 functions as the Proton acceptor in the catalytic mechanism. Residues Asn112, 177-178 (GG), and 180-181 (VV) each bind coenzyme F420-(gamma-Glu)n. Positions 195, 198, 259, and 283 each coordinate substrate.

It belongs to the F420-dependent glucose-6-phosphate dehydrogenase family. In terms of assembly, homodimer.

It carries out the reaction oxidized coenzyme F420-(gamma-L-Glu)(n) + D-glucose 6-phosphate + H(+) = 6-phospho-D-glucono-1,5-lactone + reduced coenzyme F420-(gamma-L-Glu)(n). Functionally, catalyzes the coenzyme F420-dependent oxidation of glucose 6-phosphate (G6P) to 6-phosphogluconolactone. Appears to have a role in resistance to oxidative stress, via its consumption of G6P that serves as a source of reducing power to combat oxidative stress in mycobacteria. This is F420-dependent glucose-6-phosphate dehydrogenase from Mycolicibacterium fortuitum (Mycobacterium fortuitum).